A 394-amino-acid chain; its full sequence is Anhydro-N-acetylmuramic acid kinase (394 aa).

11 to 18 lines the ATP pocket; it reads GTSADGID.

It belongs to the anhydro-N-acetylmuramic acid kinase family.

The enzyme catalyses 1,6-anhydro-N-acetyl-beta-muramate + ATP + H2O = N-acetyl-D-muramate 6-phosphate + ADP + H(+). Its pathway is amino-sugar metabolism; 1,6-anhydro-N-acetylmuramate degradation. It participates in cell wall biogenesis; peptidoglycan recycling. Functionally, catalyzes the specific phosphorylation of 1,6-anhydro-N-acetylmuramic acid (anhMurNAc) with the simultaneous cleavage of the 1,6-anhydro ring, generating MurNAc-6-P. Is required for the utilization of anhMurNAc either imported from the medium or derived from its own cell wall murein, and thus plays a role in cell wall recycling. In Deinococcus geothermalis (strain DSM 11300 / CIP 105573 / AG-3a), this protein is Anhydro-N-acetylmuramic acid kinase.